The sequence spans 180 residues: MMKHFLLVVNILAVTLPFLAADIQNQEQTTCRENEERLFHQVTAPYIPVHYVMNRYPQYEPSYYLRRQAVPTLNPFMLNPYYVKPIVFKPNVQVPHWQILPNIHQPKVGRHSHPFFMAILPNKMQDKAVTPTTNTIAAVEPTPIPTTEPVVSTEVIAEASPELIISPETTTEATAASAAA.

The N-terminal stretch at 1 to 21 (MMKHFLLVVNILAVTLPFLAA) is a signal peptide. Residues Thr-132, Thr-142, Thr-147, and Thr-153 are each glycosylated (O-linked (GalNAc...) threonine). Ser-160 carries the phosphoserine; alternate modification. An O-linked (GalNAc...) serine; alternate glycan is attached at Ser-160.

Belongs to the kappa-casein family. In terms of tissue distribution, mammary gland specific. Secreted in milk.

It localises to the secreted. Kappa-casein stabilizes micelle formation, preventing casein precipitation in milk. This chain is Kappa-casein (CSN3), found in Oryctolagus cuniculus (Rabbit).